The sequence spans 327 residues: Ribonucleoside-diphosphate reductase small chain (327 aa).

D70, E101, and H104 together coordinate Fe cation. Y108 is an active-site residue. Residues E164, E198, and H201 each contribute to the Fe cation site.

It belongs to the ribonucleoside diphosphate reductase small chain family. Heterotetramer composed of a homodimer of the large subunit (R1) and a homodimer of the small subunit (R2). Larger multisubunit protein complex are also active, composed of (R1)n(R2)n. It depends on Fe cation as a cofactor.

It catalyses the reaction a 2'-deoxyribonucleoside 5'-diphosphate + [thioredoxin]-disulfide + H2O = a ribonucleoside 5'-diphosphate + [thioredoxin]-dithiol. Its function is as follows. Ribonucleoside-diphosphate reductase holoenzyme provides the precursors necessary for viral DNA synthesis. Allows virus growth in non-dividing cells. Catalyzes the biosynthesis of deoxyribonucleotides from the corresponding ribonucleotides. This African swine fever virus (isolate Tick/South Africa/Pretoriuskop Pr4/1996) (ASFV) protein is Ribonucleoside-diphosphate reductase small chain.